A 214-amino-acid polypeptide reads, in one-letter code: GTP-binding nuclear protein GSP1/Ran (214 aa).

The Small GTPase Ran-type domain maps to 4-168 (EVPTFKLVLV…LWLARKLAGN (165 aa)). 15 to 22 (DGGTGKTT) provides a ligand contact to GTP. A switch-I region spans residues 34–42 (KKYIATIGV). GTP is bound by residues Gly65, 119–122 (NKVD), and 147–149 (SAK). Positions 65 to 81 (GQEKFGGLRDGYYINAQ) are switch-II.

The protein belongs to the small GTPase superfamily. Ran family. In terms of assembly, found in a nuclear export complex with RanGTP, exportin and pre-miRNA.

It is found in the nucleus. Functionally, GTP-binding protein involved in nucleocytoplasmic transport. Required for the import of protein into the nucleus and also for RNA export. Involved in chromatin condensation and control of cell cycle. The chain is GTP-binding nuclear protein GSP1/Ran (GSP1) from Candida glabrata (strain ATCC 2001 / BCRC 20586 / JCM 3761 / NBRC 0622 / NRRL Y-65 / CBS 138) (Yeast).